The primary structure comprises 216 residues: Cytochrome c biogenesis ATP-binding export protein CcmA (216 aa).

An ABC transporter domain is found at 11–216 (LSANELTCIR…RKITLDYRFV (206 aa)). Residue 43–50 (GPNGAGKT) coordinates ATP.

It belongs to the ABC transporter superfamily. CcmA exporter (TC 3.A.1.107) family. As to quaternary structure, the complex is composed of two ATP-binding proteins (CcmA) and two transmembrane proteins (CcmB).

The protein localises to the cell inner membrane. The catalysed reaction is heme b(in) + ATP + H2O = heme b(out) + ADP + phosphate + H(+). In terms of biological role, part of the ABC transporter complex CcmAB involved in the biogenesis of c-type cytochromes; once thought to export heme, this seems not to be the case, but its exact role is uncertain. Responsible for energy coupling to the transport system. The chain is Cytochrome c biogenesis ATP-binding export protein CcmA from Shewanella frigidimarina (strain NCIMB 400).